Here is an 86-residue protein sequence, read N- to C-terminus: UPF0335 protein BruAb1_1737 (86 aa).

It belongs to the UPF0335 family.

The polypeptide is UPF0335 protein BruAb1_1737 (Brucella abortus biovar 1 (strain 9-941)).